We begin with the raw amino-acid sequence, 218 residues long: tRNA (guanine-N(7)-)-methyltransferase (218 aa).

The disordered stretch occupies residues 1-25 (MRLKNKPWANELVEEHPESALDRPN). A compositionally biased stretch (basic and acidic residues) spans 13–25 (VEEHPESALDRPN). 4 residues coordinate S-adenosyl-L-methionine: Glu-45, Glu-70, Asp-97, and Asp-119. Asp-119 is an active-site residue. Lys-123 is a substrate binding site. Residues 125 to 130 (RHEKRR) form an interaction with RNA region. Residues Asp-155 and 195–198 (TEYE) each bind substrate.

The protein belongs to the class I-like SAM-binding methyltransferase superfamily. TrmB family.

It catalyses the reaction guanosine(46) in tRNA + S-adenosyl-L-methionine = N(7)-methylguanosine(46) in tRNA + S-adenosyl-L-homocysteine. It participates in tRNA modification; N(7)-methylguanine-tRNA biosynthesis. Functionally, catalyzes the formation of N(7)-methylguanine at position 46 (m7G46) in tRNA. The protein is tRNA (guanine-N(7)-)-methyltransferase of Lactobacillus delbrueckii subsp. bulgaricus (strain ATCC BAA-365 / Lb-18).